A 56-amino-acid chain; its full sequence is Small ribosomal subunit protein uS14A (56 aa).

Zn(2+)-binding residues include cysteine 21 and cysteine 24. Serine 25 carries the post-translational modification Phosphoserine. 2 residues coordinate Zn(2+): cysteine 39 and cysteine 42.

This sequence belongs to the universal ribosomal protein uS14 family. Component of the small ribosomal subunit (SSU). Mature yeast ribosomes consist of a small (40S) and a large (60S) subunit. The 40S small subunit contains 1 molecule of ribosomal RNA (18S rRNA) and 33 different proteins (encoded by 57 genes). The large 60S subunit contains 3 rRNA molecules (25S, 5.8S and 5S rRNA) and 46 different proteins (encoded by 81 genes). Zn(2+) serves as cofactor.

The protein resides in the cytoplasm. Component of the ribosome, a large ribonucleoprotein complex responsible for the synthesis of proteins in the cell. The small ribosomal subunit (SSU) binds messenger RNAs (mRNAs) and translates the encoded message by selecting cognate aminoacyl-transfer RNA (tRNA) molecules. The large subunit (LSU) contains the ribosomal catalytic site termed the peptidyl transferase center (PTC), which catalyzes the formation of peptide bonds, thereby polymerizing the amino acids delivered by tRNAs into a polypeptide chain. The nascent polypeptides leave the ribosome through a tunnel in the LSU and interact with protein factors that function in enzymatic processing, targeting, and the membrane insertion of nascent chains at the exit of the ribosomal tunnel. This Saccharomyces cerevisiae (strain ATCC 204508 / S288c) (Baker's yeast) protein is Small ribosomal subunit protein uS14A.